Here is a 259-residue protein sequence, read N- to C-terminus: Phosphatidylglycerol--prolipoprotein diacylglyceryl transferase (259 aa).

Transmembrane regions (helical) follow at residues 9–29, 55–75, 92–112, and 117–137; these read IIFS…VVGI, FITY…VLLY, EGGM…YLFC, and INFL…LFLG. Residue R138 coordinates a 1,2-diacyl-sn-glycero-3-phospho-(1'-sn-glycerol). 3 helical membrane-spanning segments follow: residues 172–192, 201–221, and 228–248; these read QLYE…YATF, GLNS…IEIF, and IGFI…MLLL.

The protein belongs to the Lgt family.

It localises to the cell inner membrane. The enzyme catalyses L-cysteinyl-[prolipoprotein] + a 1,2-diacyl-sn-glycero-3-phospho-(1'-sn-glycerol) = an S-1,2-diacyl-sn-glyceryl-L-cysteinyl-[prolipoprotein] + sn-glycerol 1-phosphate + H(+). The protein operates within protein modification; lipoprotein biosynthesis (diacylglyceryl transfer). Functionally, catalyzes the transfer of the diacylglyceryl group from phosphatidylglycerol to the sulfhydryl group of the N-terminal cysteine of a prolipoprotein, the first step in the formation of mature lipoproteins. This is Phosphatidylglycerol--prolipoprotein diacylglyceryl transferase from Rickettsia felis (strain ATCC VR-1525 / URRWXCal2) (Rickettsia azadi).